We begin with the raw amino-acid sequence, 342 residues long: Aquaporin-8 (342 aa).

A run of 3 helical transmembrane segments spans residues 55–75 (FLAVFVLMVFIEGSAATAIFT), 98–118 (VAGGVSGAFLNPAVALAFAVL), and 126–146 (CIFYMISQYLAAFVASCTMFA). Positions 108-110 (NPA) match the NPA 1 motif. Residue N166 is glycosylated (N-linked (GlcNAc...) asparagine). Transmembrane regions (helical) follow at residues 184-204 (TAFADQVFCTAILLIVVLAMC) and 215-235 (FLPIAIGLLIITISCTLSYNA). The NPA 2 motif lies at 240 to 242 (NPS). Residues 266–286 (YTWFFVPVLGSHCGAIIGGAI) form a helical membrane-spanning segment. The segment covering 302–327 (TNSVSSMSYNEDNSTLTKRKQVSNIV) has biased composition (polar residues). Residues 302–342 (TNSVSSMSYNEDNSTLTKRKQVSNIVHDSKGAKGSSTAPVN) form a disordered region. Residue N314 is glycosylated (N-linked (GlcNAc...) asparagine).

The protein belongs to the MIP/aquaporin (TC 1.A.8) family.

It localises to the cell membrane. Aquaglyceroporin that may modulate the water content and osmolytes during anhydrobiosis. The chain is Aquaporin-8 from Milnesium tardigradum (Water bear).